Consider the following 210-residue polypeptide: CLAVATA3/ESR (CLE)-related protein 4D (210 aa).

Residues 1–21 (MAKNAMLCLLILSVVLALAFA) form the signal peptide. The interval 21 to 83 (ATNKKDDEEP…SNQLPNNNWM (63 aa)) is required for secretion from the host cytoplasm to the host apoplasm. N-linked (GlcNAc...) asparagine glycans are attached at residues N32 and N59. The disordered stretch occupies residues 115–210 (RRKTGTHSQR…APAGPDPIHH (96 aa)). Basic and acidic residues-rich tracts occupy residues 125-137 (HHEETTLEQEKRG), 144-158 (PIHHQDTTFEQEKRG), 165-179 (PIHHQDTTLEQEKRV), and 186-200 (PIHHQDTKFEQEKRG). One copy of the A-1 repeat lies at 127–135 (EETTLEQEK). Positions 129–198 (TTLEQEKRGA…HQDTKFEQEK (70 aa)) are 4 X approximate repeat A. A CLE-1 repeat occupies 136 to 147 (RGAPAGPDPIHH). The tract at residues 136–210 (RGAPAGPDPI…APAGPDPIHH (75 aa)) is 4 X approximate repeat CLE. The stretch at 148–156 (QDTTFEQEK) is one A-2 repeat. The CLE-2 repeat unit spans residues 157–168 (RGAPAGPDPIHH). An A-3 repeat occupies 169–177 (QDTTLEQEK). Residues 178 to 189 (RVAGAGPDPIHH) form a CLE-3 repeat. Residues 190-198 (QDTKFEQEK) form an A-4 repeat. Residues 199–210 (RGAPAGPDPIHH) form a CLE-4 repeat.

Belongs to the CLV3/ESR signal peptide family. In terms of tissue distribution, highly expressed exclusively within the dorsal esophageal gland cell during syncytium formation in host plants.

It is found in the secreted. The protein resides in the host cytoplasm. The protein localises to the host extracellular space. Its subcellular location is the extracellular space. It localises to the apoplast. Functionally, mimics host plant CLE extracellular signal peptides that regulate cell fate. May play a role in the differentiation or division of feeding cells (syncytia) induced in plant roots during infection. The chain is CLAVATA3/ESR (CLE)-related protein 4D (CLE-4D) from Globodera rostochiensis (Golden nematode worm).